The primary structure comprises 246 residues: Homeobox protein Hox-B4a (246 aa).

The tract at residues 23 to 125 is disordered; sequence YSQSDYLPSH…SQNTSTVSSR (103 aa). Composition is skewed to polar residues over residues 39-48 and 112-123; these read AQRQDPSFQH and QTPTSQNTSTVS. The Antp-type hexapeptide motif lies at 130 to 135; the sequence is VYPWMK. A DNA-binding region (homeobox) is located at residues 151 to 210; the sequence is PKRSRTAYTRQQVLELEKEFHYNRYLTRRRRVEIAHTLCLSERQIKIWFQNRRMKWKKDH. A disordered region spans residues 210-246; sequence HKLPNTKIRSNSASTNSSGCPTLCSNQSRASGPPPSL. Polar residues predominate over residues 216-239; the sequence is KIRSNSASTNSSGCPTLCSNQSRA.

Belongs to the Antp homeobox family. Deformed subfamily.

The protein resides in the nucleus. Sequence-specific transcription factor which is part of a developmental regulatory system that provides cells with specific positional identities on the anterior-posterior axis. This chain is Homeobox protein Hox-B4a (hoxb4a), found in Danio rerio (Zebrafish).